Here is a 270-residue protein sequence, read N- to C-terminus: Glutamate 5-kinase (270 aa).

Residue Lys17 participates in ATP binding. Ser57, Asp144, and Asn160 together coordinate substrate. ATP contacts are provided by residues Ser180–Asp181 and Thr222–Lys228.

This sequence belongs to the glutamate 5-kinase family.

It is found in the cytoplasm. It catalyses the reaction L-glutamate + ATP = L-glutamyl 5-phosphate + ADP. It functions in the pathway amino-acid biosynthesis; L-proline biosynthesis; L-glutamate 5-semialdehyde from L-glutamate: step 1/2. Functionally, catalyzes the transfer of a phosphate group to glutamate to form L-glutamate 5-phosphate. This chain is Glutamate 5-kinase, found in Lactococcus lactis subsp. lactis (strain IL1403) (Streptococcus lactis).